The sequence spans 68 residues: Protein transport protein Sec61 subunit gamma (68 aa).

The Cytoplasmic segment spans residues 1 to 32 (MDQVMAWVEPGKQFAKDSIRLVKRCTKPDRKE). Residues 33 to 61 (FQKIAVATAIGFAIMGFIGFFVKLIHIPI) traverse the membrane as a helical segment. Over 62–68 (NNIIVGS) the chain is Extracellular.

Belongs to the SecE/SEC61-gamma family. Heterotrimeric complex composed of SEC61-alpha, SEC61-beta and SEC61-gamma. Component of the ribosome-associated ER translocon complex.

The protein resides in the endoplasmic reticulum membrane. Functionally, necessary for protein translocation in the endoplasmic reticulum and multi-pass membrane protein biogenesis. The sequence is that of Protein transport protein Sec61 subunit gamma (SEC61G) from Ciona intestinalis (Transparent sea squirt).